The following is a 121-amino-acid chain: Large ribosomal subunit protein bL20 (121 aa).

This sequence belongs to the bacterial ribosomal protein bL20 family.

Binds directly to 23S ribosomal RNA and is necessary for the in vitro assembly process of the 50S ribosomal subunit. It is not involved in the protein synthesizing functions of that subunit. This is Large ribosomal subunit protein bL20 from Persephonella marina (strain DSM 14350 / EX-H1).